A 296-amino-acid polypeptide reads, in one-letter code: Ribosomal RNA small subunit methyltransferase A (296 aa).

Residues Asn-31, Leu-33, Gly-58, Glu-79, Asp-104, and Asn-129 each contribute to the S-adenosyl-L-methionine site.

The protein belongs to the class I-like SAM-binding methyltransferase superfamily. rRNA adenine N(6)-methyltransferase family. RsmA subfamily.

The protein localises to the cytoplasm. The enzyme catalyses adenosine(1518)/adenosine(1519) in 16S rRNA + 4 S-adenosyl-L-methionine = N(6)-dimethyladenosine(1518)/N(6)-dimethyladenosine(1519) in 16S rRNA + 4 S-adenosyl-L-homocysteine + 4 H(+). Functionally, specifically dimethylates two adjacent adenosines (A1518 and A1519) in the loop of a conserved hairpin near the 3'-end of 16S rRNA in the 30S particle. May play a critical role in biogenesis of 30S subunits. The sequence is that of Ribosomal RNA small subunit methyltransferase A from Shouchella clausii (strain KSM-K16) (Alkalihalobacillus clausii).